Consider the following 192-residue polypeptide: Phosphoheptose isomerase (192 aa).

Positions valine 34–asparagine 192 constitute an SIS domain. A substrate-binding site is contributed by asparagine 49–glycine 51. The Zn(2+) site is built by histidine 58 and glutamate 62. Residues glutamate 62, asparagine 91–aspartate 92, serine 117–serine 119, serine 122, and glutamine 169 contribute to the substrate site. Zn(2+)-binding residues include glutamine 169 and histidine 177.

It belongs to the SIS family. GmhA subfamily. In terms of assembly, homotetramer. Zn(2+) serves as cofactor.

The protein resides in the cytoplasm. It catalyses the reaction 2 D-sedoheptulose 7-phosphate = D-glycero-alpha-D-manno-heptose 7-phosphate + D-glycero-beta-D-manno-heptose 7-phosphate. Its pathway is carbohydrate biosynthesis; D-glycero-D-manno-heptose 7-phosphate biosynthesis; D-glycero-alpha-D-manno-heptose 7-phosphate and D-glycero-beta-D-manno-heptose 7-phosphate from sedoheptulose 7-phosphate: step 1/1. Catalyzes the isomerization of sedoheptulose 7-phosphate in D-glycero-D-manno-heptose 7-phosphate. This chain is Phosphoheptose isomerase, found in Geobacter sp. (strain M21).